A 176-amino-acid chain; its full sequence is Cytochrome b (176 aa).

3 helical membrane-spanning segments follow: residues 33-53, 77-98, and 113-133; these read FGSLLGICLALQILTGIFLAM, WVLRYLHANGASMFFICLYLHV, and WNMGVILLFAVMATAFMGYVL. Heme b-binding residues include histidine 83 and histidine 97.

The protein belongs to the cytochrome b family. The cytochrome bc1 complex contains 11 subunits: 3 respiratory subunits (MT-CYB, CYC1 and UQCRFS1), 2 core proteins (UQCRC1 and UQCRC2) and 6 low-molecular weight proteins (UQCRH/QCR6, UQCRB/QCR7, UQCRQ/QCR8, UQCR10/QCR9, UQCR11/QCR10 and a cleavage product of UQCRFS1). This cytochrome bc1 complex then forms a dimer. It depends on heme b as a cofactor.

It localises to the mitochondrion inner membrane. In terms of biological role, component of the ubiquinol-cytochrome c reductase complex (complex III or cytochrome b-c1 complex) that is part of the mitochondrial respiratory chain. The b-c1 complex mediates electron transfer from ubiquinol to cytochrome c. Contributes to the generation of a proton gradient across the mitochondrial membrane that is then used for ATP synthesis. This Lasionycteris noctivagans (Silver-haired bat) protein is Cytochrome b (MT-CYB).